We begin with the raw amino-acid sequence, 535 residues long: Arylsulfatase K (535 aa).

An N-terminal signal peptide occupies residues methionine 1–glycine 22. Residues aspartate 44 and cysteine 84 each contribute to the Ca(2+) site. The active-site Nucleophile is cysteine 84. Cysteine 84 carries the post-translational modification 3-oxoalanine (Cys). Asparagine 112 carries N-linked (GlcNAc...) asparagine glycosylation. Lysine 132 contributes to the substrate binding site. A glycan (N-linked (GlcNAc...) asparagine) is linked at asparagine 197. Histidine 255 contributes to the substrate binding site. The N-linked (GlcNAc...) asparagine glycan is linked to asparagine 266. 2 residues coordinate Ca(2+): aspartate 317 and histidine 318. Residues asparagine 379, asparagine 417, and asparagine 502 are each glycosylated (N-linked (GlcNAc...) asparagine).

This sequence belongs to the sulfatase family. Requires Ca(2+) as cofactor. In terms of processing, the conversion to 3-oxoalanine (also known as C-formylglycine, FGly), of a serine or cysteine residue in prokaryotes and of a cysteine residue in eukaryotes, is critical for catalytic activity. Post-translationally, the 75-kDa precursor undergoes proteolytic processing to yield a 23 kDa form. N-glycosylated with both high mannose and complex type sugars.

Its subcellular location is the secreted. The protein localises to the lysosome. It catalyses the reaction an aryl sulfate + H2O = a phenol + sulfate + H(+). It carries out the reaction Hydrolysis of the 2-sulfate groups of the 2-O-sulfo-D-glucuronate residues of chondroitin sulfate, heparin and heparitin sulfate.. In terms of biological role, catalyzes the hydrolysis of pseudosubstrates such as p-nitrocatechol sulfate and p-nitrophenyl sulfate. Catalyzes the hydrolysis of the 2-sulfate groups of the 2-O-sulfo-D-glucuronate residues of chondroitin sulfate, heparin and heparitin sulfate. Acts selectively on 2-sulfoglucuronate and lacks activity against 2-sulfoiduronate. The polypeptide is Arylsulfatase K (ARSK) (Canis lupus familiaris (Dog)).